Here is a 469-residue protein sequence, read N- to C-terminus: Lipase A (469 aa).

Positions 1 to 22 (MMFLTQLVSALFLFFLGPISYG) are cleaved as a signal peptide. Pro residues predominate over residues 40-51 (PSEDPFYQPPPG). Residues 40–59 (PSEDPFYQPPPGYEETEPGT) form a disordered region. N-linked (GlcNAc...) asparagine glycosylation is present at N111. A disulfide bridge links C129 with C304. Catalysis depends on charge relay system residues S217, D361, and H393. C377 and C421 are joined by a disulfide.

It belongs to the AB hydrolase superfamily. Lipase family. Class Lip subfamily. Monomer.

It is found in the secreted. It carries out the reaction a triacylglycerol + H2O = a diacylglycerol + a fatty acid + H(+). Functionally, hydrolyzes triglycerides, with a preference for substrates with short-chain lengths (C4 to C8). The polypeptide is Lipase A (Arthroderma benhamiae (strain ATCC MYA-4681 / CBS 112371) (Trichophyton mentagrophytes)).